Here is a 165-residue protein sequence, read N- to C-terminus: Cyclic pyranopterin monophosphate synthase (165 aa).

Substrate contacts are provided by residues 83–85 (FCH) and 120–121 (ME). Residue D135 is part of the active site.

Belongs to the MoaC family. As to quaternary structure, homohexamer; trimer of dimers.

The enzyme catalyses (8S)-3',8-cyclo-7,8-dihydroguanosine 5'-triphosphate = cyclic pyranopterin phosphate + diphosphate. It participates in cofactor biosynthesis; molybdopterin biosynthesis. Catalyzes the conversion of (8S)-3',8-cyclo-7,8-dihydroguanosine 5'-triphosphate to cyclic pyranopterin monophosphate (cPMP). This Xanthomonas axonopodis pv. citri (strain 306) protein is Cyclic pyranopterin monophosphate synthase.